The sequence spans 175 residues: Cytochrome c homolog (175 aa).

At 1 to 8 (MSGKELNK) the chain is on the cytoplasmic side. The helical; Signal-anchor transmembrane segment at 9–29 (IVAAILFASLIAMMVGFVANI) threads the bilayer. The Periplasmic portion of the chain corresponds to 30-175 (LYKPTLELQH…LFLKTYVHDK (146 aa)). Heme c contacts are provided by Cys-84, Cys-87, His-88, and Met-150.

It belongs to the cytochrome c family. Post-translationally, binds 1 heme c group covalently per subunit.

It is found in the cell membrane. Its function is as follows. May be involved in electron transfer from bc1 complex to aa3. The chain is Cytochrome c homolog (cycM) from Rickettsia conorii (strain ATCC VR-613 / Malish 7).